The following is a 90-amino-acid chain: Phosphocarrier protein NPr (90 aa).

Residues 2–90 (TQYRRVAIKN…ALFESGFDED (89 aa)) form the HPr domain. H16 serves as the catalytic Pros-phosphohistidine intermediate.

It belongs to the HPr family.

It localises to the cytoplasm. In terms of biological role, component of the phosphoenolpyruvate-dependent nitrogen-metabolic phosphotransferase system (nitrogen-metabolic PTS), that seems to be involved in regulating nitrogen metabolism. The phosphoryl group from phosphoenolpyruvate (PEP) is transferred to the phosphoryl carrier protein NPr by enzyme I-Ntr. Phospho-NPr then transfers it to EIIA-Ntr. Could function in the transcriptional regulation of sigma-54 dependent operons in conjunction with the NPr (PtsO) and EIIA-Ntr (PtsN) proteins. This Proteus mirabilis (strain HI4320) protein is Phosphocarrier protein NPr (ptsO).